Here is a 158-residue protein sequence, read N- to C-terminus: Protein-export protein SecB (158 aa).

The protein belongs to the SecB family. In terms of assembly, homotetramer, a dimer of dimers. One homotetramer interacts with 1 SecA dimer.

Its subcellular location is the cytoplasm. Its function is as follows. One of the proteins required for the normal export of preproteins out of the cell cytoplasm. It is a molecular chaperone that binds to a subset of precursor proteins, maintaining them in a translocation-competent state. It also specifically binds to its receptor SecA. The sequence is that of Protein-export protein SecB from Rhodopseudomonas palustris (strain HaA2).